Here is a 659-residue protein sequence, read N- to C-terminus: Serine/threonine-protein kinase StkP (659 aa).

Topologically, residues 1 to 342 (MIQIGKIFAG…PQAPKKHRFK (342 aa)) are cytoplasmic. In terms of domain architecture, Protein kinase spans 12–273 (YRIVKQIGRG…EMYVDLSSSL (262 aa)). Residues 18 to 26 (IGRGGMADV) and K42 each bind ATP. The Proton acceptor role is filled by D136. The chain crosses the membrane as a helical span at residues 343–363 (MRYLILLASLVLVAASLIWIL). The Extracellular portion of the chain corresponds to 364 to 659 (SRTPATIAIP…YKPKTTSATP (296 aa)). 4 consecutive PASTA domains span residues 366 to 433 (TPAT…VVSS), 434 to 505 (GKQS…TVAK), 506 to 577 (KATT…TVAK), and 578 to 651 (KVTS…SIYK). The segment at 541-561 (EEESSESEPGTIMKQSPGAGT) is disordered.

This sequence belongs to the protein kinase superfamily. Ser/Thr protein kinase family. In terms of assembly, homodimer. StkP forms dimers through its transmembrane and extracellular domains. Dimer formation likely promotes autophosphorylation activity and might be necessary for targeting StkP substrate. Post-translationally, autophosphorylation occurs predominantly at the threonine residue and weakly at the serine residue. Dephosphorylated by PhpP.

The protein resides in the cell membrane. The enzyme catalyses L-seryl-[protein] + ATP = O-phospho-L-seryl-[protein] + ADP + H(+). It catalyses the reaction L-threonyl-[protein] + ATP = O-phospho-L-threonyl-[protein] + ADP + H(+). Its function is as follows. Protein kinase involved in signal transduction pathways that regulate various cellular processes. Likely senses intracellular peptidoglycan subunits present in the cell division septa of actively growing cells; thus, intracellular unlinked peptidoglycan may serve as the signal molecules that trigger StkP phosphorylation activity on a set of substrates. Plays a crucial role in the regulation of cell shape and cell division of S.pneumoniae through control of at least DivIVA activity. Is involved in competence triggering, and is required for the expression of the central competence operon comCDE. StkP also plays an important role for bacterial survival in vivo. Identified target substrates that are specifically phosphorylated by StkP in vivo, mainly on threonine residues, are DivIVA, GlmM, PpaC, MapZ, KhpB (also called EloR/Jag, shown in strains R6 and Rx1) and StkP itself. Autophosphorylated StkP is a substrate for the cotranscribed protein phosphatase PhpP (shown in the avirulent strain Rx / Cp1015); PhpP and StkP appear to constitute a functional signaling couple in vivo. The chain is Serine/threonine-protein kinase StkP (stkP) from Streptococcus pneumoniae serotype 2 (strain D39 / NCTC 7466).